We begin with the raw amino-acid sequence, 195 residues long: Imidazoleglycerol-phosphate dehydratase (195 aa).

Belongs to the imidazoleglycerol-phosphate dehydratase family.

The protein localises to the cytoplasm. The enzyme catalyses D-erythro-1-(imidazol-4-yl)glycerol 3-phosphate = 3-(imidazol-4-yl)-2-oxopropyl phosphate + H2O. The protein operates within amino-acid biosynthesis; L-histidine biosynthesis; L-histidine from 5-phospho-alpha-D-ribose 1-diphosphate: step 6/9. In Shouchella clausii (strain KSM-K16) (Alkalihalobacillus clausii), this protein is Imidazoleglycerol-phosphate dehydratase.